The sequence spans 646 residues: Chaperone protein DnaK (646 aa).

Thr197 is subject to Phosphothreonine; by autocatalysis. Residues 599-646 (QQGAQAGADPNAGSSQGAQAGTDYGTSGPKTGTADDVDYEVVNDDNDK) are disordered. A compositionally biased stretch (polar residues) spans 610-628 (AGSSQGAQAGTDYGTSGPK). Positions 633-646 (DDVDYEVVNDDNDK) are enriched in acidic residues.

The protein belongs to the heat shock protein 70 family.

Its function is as follows. Acts as a chaperone. In Treponema denticola (strain ATCC 35405 / DSM 14222 / CIP 103919 / JCM 8153 / KCTC 15104), this protein is Chaperone protein DnaK.